The primary structure comprises 499 residues: Topoisomerase I damage affected protein 11 (499 aa).

The disordered stretch occupies residues 32–62 (RKTGRKIRSASSNGYRLEHHRTSSAGSMHSQ). A coiled-coil region spans residues 179-231 (ALLQSLATKELELLECKQKIEDLKKQTQHEEQNYTRRARELHELKEQVSKHLD). Phosphothreonine is present on T236. 2 positions are modified to phosphoserine: S244 and S286. Disordered stretches follow at residues 252–306 (LESR…SKQS), 332–377 (WDDS…SVSR), and 400–499 (DVIT…QKLS). Positions 257–287 (ENAGNSSLPSSVSKPKNMGHQSTNQSRSVSP) are enriched in polar residues. Residues 290–301 (IQERRQRDDSSD) are compositionally biased toward basic and acidic residues. Composition is skewed to polar residues over residues 332–359 (WDDS…QQYD) and 368–377 (KSPSQGSVSR). Residues 403–421 (TDNRCDPVYKSDRQHEQKK) are compositionally biased toward basic and acidic residues. Residues 470-479 (TREKKSKRSS) show a composition bias toward basic residues.

This sequence belongs to the TDA11 family.

The protein localises to the cytoplasm. The protein is Topoisomerase I damage affected protein 11 (TDA11) of Saccharomyces cerevisiae (strain Zymaflore VL3) (Baker's yeast).